Reading from the N-terminus, the 362-residue chain is MDFDSYADNYSKSISKKQCLELFEDNENLFNILNCANKINKKINGNTITYVVNRNINFTNICVGDCKFCAFKVDENHNDAYFINPKEIGKKAFEAKKLGCTEVCIQGGLRNNIDVELQSNILKEVCSATKPLGGIHIHAFSPMEVKFASENSGLDIKEALMILKENGLNTMPGTAAEILDDNIRAELCPSKLSTKEWIKIVKTAHKVGIKTTSTMMYGHIEEYKHIVNHLFILKEIQEETGGITEFVPLSFMHKMAPIYYEGNARGGSSGIEDLKVYAISRMLFGDTIKNIQVSWVKLGIKLAQMGLKCGANDFGGTLMEENISKSAGASYGTYMGAEEIRNVINAIGGAPRERDTFYNILE.

A Radical SAM core domain is found at 48 to 294 (ITYVVNRNIN…GDTIKNIQVS (247 aa)). The [4Fe-4S] cluster site is built by Cys-62, Cys-66, and Cys-69.

Belongs to the radical SAM superfamily. CofH family. In terms of assembly, consists of two subunits, CofG and CofH. [4Fe-4S] cluster serves as cofactor.

It carries out the reaction 5-amino-6-(D-ribitylamino)uracil + L-tyrosine + S-adenosyl-L-methionine = 5-amino-5-(4-hydroxybenzyl)-6-(D-ribitylimino)-5,6-dihydrouracil + 2-iminoacetate + 5'-deoxyadenosine + L-methionine + H(+). It functions in the pathway cofactor biosynthesis; coenzyme F0 biosynthesis. Functionally, catalyzes the radical-mediated synthesis of 5-amino-5-(4-hydroxybenzyl)-6-(D-ribitylimino)-5,6-dihydrouracil from 5-amino-6-(D-ribitylamino)uracil and L-tyrosine. This Methanococcus aeolicus (strain ATCC BAA-1280 / DSM 17508 / OCM 812 / Nankai-3) protein is 5-amino-6-(D-ribitylamino)uracil--L-tyrosine 4-hydroxyphenyl transferase.